Consider the following 426-residue polypeptide: Multifunctional protein ADE2 (426 aa).

Positions 1-261 (MAPAASELKL…WVAERVELLL (261 aa)) are SAICAR synthetase. The tract at residues 262–426 (KTKSQGRVVV…ADKKLRECTL (165 aa)) is AIR carboxylase.

The protein in the N-terminal section; belongs to the SAICAR synthetase family. It in the C-terminal section; belongs to the AIR carboxylase family. Class II subfamily. As to quaternary structure, homooctamer.

The catalysed reaction is 5-amino-1-(5-phospho-D-ribosyl)imidazole-4-carboxylate + L-aspartate + ATP = (2S)-2-[5-amino-1-(5-phospho-beta-D-ribosyl)imidazole-4-carboxamido]succinate + ADP + phosphate + 2 H(+). The enzyme catalyses 5-amino-1-(5-phospho-D-ribosyl)imidazole-4-carboxylate + H(+) = 5-amino-1-(5-phospho-beta-D-ribosyl)imidazole + CO2. The protein operates within purine metabolism; IMP biosynthesis via de novo pathway; 5-amino-1-(5-phospho-D-ribosyl)imidazole-4-carboxamide from 5-amino-1-(5-phospho-D-ribosyl)imidazole-4-carboxylate: step 1/2. It functions in the pathway purine metabolism; IMP biosynthesis via de novo pathway; 5-amino-1-(5-phospho-D-ribosyl)imidazole-4-carboxylate from 5-amino-1-(5-phospho-D-ribosyl)imidazole (carboxylase route): step 1/1. In Gallus gallus (Chicken), this protein is Multifunctional protein ADE2 (AIRC).